The chain runs to 229 residues: Large ribosomal subunit protein uL1 (229 aa).

It belongs to the universal ribosomal protein uL1 family. Part of the 50S ribosomal subunit.

In terms of biological role, binds directly to 23S rRNA. The L1 stalk is quite mobile in the ribosome, and is involved in E site tRNA release. Its function is as follows. Protein L1 is also a translational repressor protein, it controls the translation of the L11 operon by binding to its mRNA. The polypeptide is Large ribosomal subunit protein uL1 (Clostridium kluyveri (strain ATCC 8527 / DSM 555 / NBRC 12016 / NCIMB 10680 / K1)).